Reading from the N-terminus, the 508-residue chain is MAIAMIPKTMSTQHPDNAKMPAWASEKSMIRNDDEVEEAYQCYTIGIKEVMWDAEGKDVDTHVLRKLISKNHEFFEKNVLGSDIFLTYRVPNPAIEGTERKVLTETLESIPVNYDVFNTVYKRDIPPIFEVILPFTTSSKDLLNIAKYYEKAVAARDEIELYDNVMVKNILGETKPKKINIIPLIEDKDSMFNIDGIVKNFARAVSAKKMRVFIARSDPAMNYGMIPAVLMSKYAASRLCKMNDDIENYPIVGVGSSTFRGRFSPENIEKSLYEYSNYYTFTLQSAFKYDYPQDSVKNSINIINRHERSFDYLEDYEEEIIKNAVNKYVINYQKIIEKLAPAINNITMYLPKRRSRKLHIGLFGYSRSTGNVTLPRAISFVGAMYSMGLPPEIIGISSLLNMKDDELDIIEKTYINLRSDIMESSSYLNYEVFDALKDVYKIDQETINMIKADVKYIENNYGIKSDLGYERERHNYLSSLMNLAFKNHDFENTRKYILDMALIRKFIG.

This sequence belongs to the PEPCase type 2 family. Homotetramer. The cofactor is Mg(2+).

The enzyme catalyses oxaloacetate + phosphate = phosphoenolpyruvate + hydrogencarbonate. Its function is as follows. Catalyzes the irreversible beta-carboxylation of phosphoenolpyruvate (PEP) to form oxaloacetate (OAA), a four-carbon dicarboxylic acid source for the tricarboxylic acid cycle. The protein is Phosphoenolpyruvate carboxylase of Picrophilus torridus (strain ATCC 700027 / DSM 9790 / JCM 10055 / NBRC 100828 / KAW 2/3).